We begin with the raw amino-acid sequence, 236 residues long: MSEPPRAETFVFLDLEATGLPNMDPEIAEISLFAVHRSSLENPERDDSGSLVLPRVLDKLTLCMCPERPFTAKASEITGLSSESLMHCGKAGFNGAVVRTLQGFLSRQEGPICLVAHNGFDYDFPLLCTELQRLGAHLPQDTVCLDTLPALRGLDRAHSHGTRAQGRKSYSLASLFHRYFQAEPSAAHSAEGDVHTLLLIFLHRAPELLAWADEQARSWAHIEPMYVPPDGPSLEA.

The Mg(2+) site is built by aspartate 14 and glutamate 16. Residues 16 to 17 (EA) and tyrosine 122 each bind substrate. Histidine 188 functions as the Proton donor/acceptor in the catalytic mechanism. Position 193 (aspartate 193) interacts with Mg(2+). Aspartate 193 contributes to the substrate binding site.

The protein belongs to the exonuclease superfamily. TREX family. In terms of assembly, homodimer. Mg(2+) is required as a cofactor.

The protein localises to the nucleus. The enzyme catalyses Exonucleolytic cleavage in the 3'- to 5'-direction to yield nucleoside 5'-phosphates.. Functionally, exonuclease with a preference for double-stranded DNA with mismatched 3' termini. May play a role in DNA repair. In Mus musculus (Mouse), this protein is Three prime repair exonuclease 2 (Trex2).